A 475-amino-acid polypeptide reads, in one-letter code: Chemotaxis protein MotD (475 aa).

Disordered regions lie at residues 1 to 175, 195 to 243, and 408 to 475; these read MRPL…PVGG, LQPE…SEPD, and GDSA…HVYM. Polar residues predominate over residues 9–22; sequence RTSAASRPAQSLSV. Positions 79–100 are enriched in low complexity; that stretch reads ADVPASMADAASPDARPASERA. Positions 143–155 are enriched in basic and acidic residues; that stretch reads HSRETVHALRDAI. Gly residues predominate over residues 408-417; that stretch reads GDSASGGGGQ. Residues 427–449 are compositionally biased toward basic and acidic residues; that stretch reads EGRERAGDDGQGRQPRDGGRAAT.

It localises to the cytoplasm. Functionally, required for the rotation of the flagellar motor. Has a positive effect as flagellar rotation increases when an excess of motd is present. This is Chemotaxis protein MotD (motD) from Rhizobium meliloti (Ensifer meliloti).